The primary structure comprises 303 residues: Pycsar effector protein BcPycTIR (303 aa).

Residue 22-138 (KLVGGDKGLA…RRMAKELSKR (117 aa)) participates in a nucleoside 3',5'-cyclic phosphate binding. The tract at residues 154 to 273 (RVFVISSAEA…DMAGVTTIPY (120 aa)) is TIR-like.

In terms of assembly, purified protein forms large 2-dimensional sheets when incubated with cUMP and shorter filaments in the presence of cCMP.

It localises to the cytoplasm. It carries out the reaction NAD(+) + H2O = ADP-D-ribose + nicotinamide + H(+). Activated by cyclic UMP (cUMP) and to a lesser extent by cCMP. Pycsar (pyrimidine cyclase system for antiphage resistance) provides immunity against bacteriophage. The pyrimidine cyclase (PycC) synthesizes cyclic nucleotides in response to infection; these serve as specific second messenger signals. The signals activate the adjacent effector, leading to bacterial cell death and abortive phage infection. A clade B Pycsar system. Functionally, the effector protein of a two-gene Pycsar system. Upon activation by cyclic UMP (cUMP) degrades cellular NAD(+). Expression of this and adjacent uridylate cyclase BcPycC (AC A0A0J5ZXG5) probably confers resistance to bacteriophage. The genes are probably only expressed in response to bacteriophage infection. This protein probably only responds to cUMP (produced by its cognate NTP cyclase). This Burkholderia cepacia (Pseudomonas cepacia) protein is Pycsar effector protein BcPycTIR.